Reading from the N-terminus, the 530-residue chain is 6-phosphofructo-2-kinase/fructose-2,6-bisphosphatase 2 (530 aa).

Positions 1-15 are enriched in polar residues; it reads MSGASSSEQNNNSYE. Residues 1–21 are disordered; that stretch reads MSGASSSEQNNNSYETKPPNL. An N-acetylserine modification is found at Ser2. The tract at residues 2–248 is 6-phosphofructo-2-kinase; sequence SGASSSEQNN…VYYLMNIHVQ (247 aa). Ser29 is subject to Phosphoserine; by PKA. ATP is bound at residue 45–53; the sequence is GLPARGKTY. Beta-D-fructose 6-phosphate-binding residues include Arg78 and Arg102. The active site involves Asp128. Residues Thr130 and Arg136 each coordinate beta-D-fructose 6-phosphate. The active site involves Cys158. ATP is bound at residue 167–172; that stretch reads NILEVK. Beta-D-fructose 6-phosphate-binding residues include Lys172, Arg193, and Tyr197. A fructose-2,6-bisphosphatase region spans residues 249–530; the sequence is PRTIYLCRHG…PPALASCPCH (282 aa). A beta-D-fructose 2,6-bisphosphate-binding site is contributed by Arg256. The active-site Tele-phosphohistidine intermediate is the His257. Gly269 contributes to the beta-D-fructose 2,6-bisphosphate binding site. Glu326 acts as the Proton donor/acceptor in catalysis. Residues Tyr337, Arg351, Lys355, Tyr366, Gln392, and Arg396 each coordinate beta-D-fructose 2,6-bisphosphate. 348–351 serves as a coordination point for ATP; that stretch reads FALR. Residues 392–396 and Tyr428 each bind ATP; that span reads QAVMR. Positions 446 to 512 are disordered; it reads RDKPTNNFPK…GPTSRRPKSH (67 aa). The segment covering 450-476 has biased composition (polar residues); sequence TNNFPKNQTPVRMRRNSFTPLSSSNTI. A Phosphoserine; by AMPK and PKA modification is found at Ser466. Residue Thr468 is modified to Phosphothreonine. Position 475 is a phosphothreonine; by PKC (Thr475). A phosphoserine mark is found at Ser483 and Ser493.

In the C-terminal section; belongs to the phosphoglycerate mutase family. As to quaternary structure, homodimer. Forms a heterodimer with PFKFB3. Post-translationally, phosphorylation by AMPK stimulates activity.

The enzyme catalyses beta-D-fructose 2,6-bisphosphate + H2O = beta-D-fructose 6-phosphate + phosphate. The catalysed reaction is beta-D-fructose 6-phosphate + ATP = beta-D-fructose 2,6-bisphosphate + ADP + H(+). Its activity is regulated as follows. Phosphorylation results in the activation of the kinase activity. Synthesis and degradation of fructose 2,6-bisphosphate. This chain is 6-phosphofructo-2-kinase/fructose-2,6-bisphosphatase 2 (PFKFB2), found in Pongo abelii (Sumatran orangutan).